Consider the following 422-residue polypeptide: UDP-N-acetylglucosamine 1-carboxyvinyltransferase (422 aa).

K22 to N23 lines the phosphoenolpyruvate pocket. UDP-N-acetyl-alpha-D-glucosamine is bound at residue R94. The Proton donor role is filled by C118. The residue at position 118 (C118) is a 2-(S-cysteinyl)pyruvic acid O-phosphothioketal. UDP-N-acetyl-alpha-D-glucosamine is bound by residues R123–L127, D309, and I331.

The protein belongs to the EPSP synthase family. MurA subfamily.

The protein localises to the cytoplasm. The enzyme catalyses phosphoenolpyruvate + UDP-N-acetyl-alpha-D-glucosamine = UDP-N-acetyl-3-O-(1-carboxyvinyl)-alpha-D-glucosamine + phosphate. It functions in the pathway cell wall biogenesis; peptidoglycan biosynthesis. Its function is as follows. Cell wall formation. Adds enolpyruvyl to UDP-N-acetylglucosamine. The polypeptide is UDP-N-acetylglucosamine 1-carboxyvinyltransferase (Cereibacter sphaeroides (strain ATCC 17029 / ATH 2.4.9) (Rhodobacter sphaeroides)).